The sequence spans 140 residues: Phosphoribosyl-AMP cyclohydrolase (140 aa).

A Mg(2+)-binding site is contributed by D84. Zn(2+) is bound at residue C85. Mg(2+)-binding residues include D86 and D88. Zn(2+)-binding residues include C101 and C108.

Belongs to the PRA-CH family. As to quaternary structure, homodimer. Mg(2+) is required as a cofactor. Requires Zn(2+) as cofactor.

The protein localises to the cytoplasm. The catalysed reaction is 1-(5-phospho-beta-D-ribosyl)-5'-AMP + H2O = 1-(5-phospho-beta-D-ribosyl)-5-[(5-phospho-beta-D-ribosylamino)methylideneamino]imidazole-4-carboxamide. The protein operates within amino-acid biosynthesis; L-histidine biosynthesis; L-histidine from 5-phospho-alpha-D-ribose 1-diphosphate: step 3/9. Functionally, catalyzes the hydrolysis of the adenine ring of phosphoribosyl-AMP. The protein is Phosphoribosyl-AMP cyclohydrolase of Chloroherpeton thalassium (strain ATCC 35110 / GB-78).